Consider the following 466-residue polypeptide: Dihydrolipoyl dehydrogenase 3 (466 aa).

FAD-binding positions include E33–C42, K51, and G115. C42 and C47 form a disulfide bridge. NAD(+) contacts are provided by residues G181–I185, E204, V238, and A271–R274. FAD is bound by residues D313 and A321. Residue H445 is the Proton acceptor of the active site.

This sequence belongs to the class-I pyridine nucleotide-disulfide oxidoreductase family. Homodimer. It depends on FAD as a cofactor.

The protein localises to the cytoplasm. It catalyses the reaction N(6)-[(R)-dihydrolipoyl]-L-lysyl-[protein] + NAD(+) = N(6)-[(R)-lipoyl]-L-lysyl-[protein] + NADH + H(+). Functionally, LPD-3 may substitute for lipoamide dehydrogenase of the 2-oxoglutarate dehydrogenase and pyruvate multienzyme complexes when the latter is inactive or missing. This is Dihydrolipoyl dehydrogenase 3 (lpd3) from Pseudomonas putida (Arthrobacter siderocapsulatus).